The chain runs to 138 residues: Large ribosomal subunit protein uL16 (138 aa).

Residues 1–16 are compositionally biased toward basic residues; that stretch reads MLIPRRVKHRKQHHPS. The disordered stretch occupies residues 1–25; that stretch reads MLIPRRVKHRKQHHPSRSGAAKGGT.

Belongs to the universal ribosomal protein uL16 family. Part of the 50S ribosomal subunit.

Its function is as follows. Binds 23S rRNA and is also seen to make contacts with the A and possibly P site tRNAs. The polypeptide is Large ribosomal subunit protein uL16 (Rhodococcus erythropolis (strain PR4 / NBRC 100887)).